A 1044-amino-acid chain; its full sequence is MSNSNTTQETLEIMKESEKKLVEESVNKNKFISKTPSKEDVEKEGEENGLRQETQRRTSSHGHARKRAKSNSKLKLVRSLAVCEESSTPFVDGPLDTQDIIQLHISCPSDKEEEKSTKDVSEKEDKDKSKEKVPRKMLSRDSSQEYTDSTGIDLHEFLVNTLKKNPRDRMMLLKLEQEILDFINDNNNQFKKFPQMTSYHRMLLHRVAAYFGMDHNVDQTGKAVIINKTSSTRIPEQRFSEHIKDEKNTEFQQRFILKRDDASMDRDDNQMRVPLQDGRRSKSIEEREEEYQRVRERIFARETGQNGYLNDIRLSKEAFSSSSHKRRQIFRGNREGLSRTSSSRQSSTDSELKSLEPRPWSSTDSDGSVRSMRPPVTKASSFSGISILTRGDSIGSSKGGSAGRLSRPGMALGAPEVCNQVTSPQSVRGLLPCTAQQQQQQQQQQQQLPALPPTPQHQPPLNNHMISQPVPALQPSPQPVQFSPSSCPQVLLPVSPPQQYNMAEDLSNPFGQMSLSRQGSTEAADPSSALFQPPLISQHPQQASFIMASAGQPLPTSNYSTSSHAPPTQQVLPPQGYMQPPQQIQVSYYPPGQYPNSNQQYRPLSHPVAYSPQRGQQLPQASQQPGLQPMMSNQQQTAYQGMLGVQQPQNQGLLSNQRSSMGGQMQGLVVQYTPLPSYQVPVGSDSQNVVQPSFQQPMLVPASQSVQGGLPTGGVPVYYSMIPPAQQNGTSPSVGFLQPPGSEQYQMPQSPSPCSPPQMSQQYSGVSPSGPGVVVMQLNVPNGPQAPQNPSMVQWSHCKYYSVEQRGQKPGDLYSPDGSPQANAQMGSSPVTSPTQSPAPSPVTSLSNVCTGLSPLPVLTPFPRPGGPAQGDGRYSLLGQPLQYNLSICPPLLHGQSTYTVHQGQSGLKHGNRGKRQALKSASTDLGTADVVLGRVLEVTDLPEGITRTEADKLFTQLAMSGAKIQWLKDAQGLPGAGGGDNSGTAENGRHPDLAALYTIVAVFPSPLAAQNASLRLNNSVSRFKLRVAKKNYDLRILERASSQ.

Disordered regions lie at residues 23–71 and 106–147; these read EESV…AKSN and SCPS…QEYT. Residues 36 to 56 are compositionally biased toward basic and acidic residues; the sequence is PSKEDVEKEGEENGLRQETQR. The residue at position 37 (Ser37) is a Phosphoserine. Basic residues predominate over residues 58–71; the sequence is TSSHGHARKRAKSN. Over residues 109–143 the composition is skewed to basic and acidic residues; that stretch reads SDKEEEKSTKDVSEKEDKDKSKEKVPRKMLSRDSS. The residue at position 143 (Ser143) is a Phosphoserine. The 64-residue stretch at 169–232 folds into the R3H domain; the sequence is RMMLLKLEQE…AVIINKTSST (64 aa). In terms of domain architecture, SUZ spans 233-303; it reads RIPEQRFSEH…VRERIFARET (71 aa). Composition is skewed to basic and acidic residues over residues 261–270 and 277–288; these read DASMDRDDNQ and DGRRSKSIEERE. Disordered stretches follow at residues 261–288, 320–408, 433–485, 502–533, 551–600, 729–770, and 807–848; these read DASM…EERE, SSSS…LSRP, CTAQ…FSPS, MAED…LFQP, GQPL…SNQQ, GTSP…SPSG, and GQKP…SLSN. Residues 338–349 show a composition bias toward low complexity; the sequence is SRTSSSRQSSTD. Residues Ser362, Ser365, and Ser381 each carry the phosphoserine modification. Residues 433 to 449 are compositionally biased toward low complexity; it reads CTAQQQQQQQQQQQQLP. 2 stretches are compositionally biased toward polar residues: residues 509–521 and 554–572; these read PFGQ…QGST and LPTS…QQVL. A compositionally biased stretch (low complexity) spans 757–770; that stretch reads PQMSQQYSGVSPSG. Over residues 818–848 the composition is skewed to polar residues; that stretch reads GSPQANAQMGSSPVTSPTQSPAPSPVTSLSN. Ser921 and Ser923 each carry phosphoserine. Thr924 and Thr928 each carry phosphothreonine.

It localises to the nucleus. In Mus musculus (Mouse), this protein is R3H domain-containing protein 2 (R3hdm2).